Reading from the N-terminus, the 118-residue chain is Mating-type P-specific polypeptide Pc (118 aa).

The segment at residues 29 to 97 (KTTIYKNGFM…VRRQIAKLER (69 aa)) is a DNA-binding region (HMG box).

The protein resides in the nucleus. Mating type proteins are sequence specific DNA-binding proteins that act as master switches in yeast differentiation by controlling gene expression in a cell type-specific fashion. Required for conjugation and efficient meiosis. The chain is Mating-type P-specific polypeptide Pc (mat2-Pc) from Schizosaccharomyces pombe (Fission yeast).